A 401-amino-acid polypeptide reads, in one-letter code: Renin-2 (401 aa).

Residues 1-25 (MDRRRMPLWALLLLWSPCTFSLPTG) form the signal peptide. A propeptide spans 26–63 (TTFERIPLKKMPSVREILEERGVDMTRLSAEWDVFTKR) (activation peptide). The Peptidase A1 domain occupies 83 to 398 (YYGEIGIGTP…DRHNNRIGFA (316 aa)). The active site involves D101. Cystine bridges form between C114–C121 and C277–C281. The active site involves D286. C320 and C357 form a disulfide bridge.

This sequence belongs to the peptidase A1 family. Dimer of a heavy chain and a light chain joined by a disulfide bond. As to expression, submandibular gland.

The protein localises to the secreted. It carries out the reaction Cleavage of Leu-|-Xaa bond in angiotensinogen to generate angiotensin I.. In terms of biological role, renin is a highly specific endopeptidase, related to pepsin, whose only known function is to generate angiotensin I from angiotensinogen in the plasma, initiating a cascade of reactions that produce an elevation of blood pressure and increased sodium retention by the kidney. The polypeptide is Renin-2 (Mus musculus (Mouse)).